Reading from the N-terminus, the 471-residue chain is Tyrosine--tRNA ligase, mitochondrial (471 aa).

Tyrosine 71 provides a ligand contact to L-tyrosine. Position 75 (aspartate 75) interacts with ATP. Positions 76 to 85 match the 'HIGH' region motif; that stretch reads PTGDSLHVGH. The L-tyrosine site is built by aspartate 115, tyrosine 215, glutamine 219, aspartate 222, and glutamine 241. Positions 268 and 278 each coordinate ATP. The 'KMSKS' region signature appears at 275–279; sequence KLGKS. Lysine 349 and lysine 361 each carry N6-acetyllysine.

Belongs to the class-I aminoacyl-tRNA synthetase family. In terms of assembly, homodimer.

The protein localises to the mitochondrion matrix. The enzyme catalyses tRNA(Tyr) + L-tyrosine + ATP = L-tyrosyl-tRNA(Tyr) + AMP + diphosphate + H(+). Functionally, catalyzes the attachment of tyrosine to tRNA(Tyr) in a two-step reaction: tyrosine is first activated by ATP to form Tyr-AMP and then transferred to the acceptor end of tRNA(Tyr). The polypeptide is Tyrosine--tRNA ligase, mitochondrial (Yars2) (Rattus norvegicus (Rat)).